The following is a 699-amino-acid chain: MAESVRVAVRCRPFNQREKDLNTTLCVGMTPNVGQVNLNAPDGAAKDFTFDGAYFMDSTGEQIYNDIVFPLVENVIEGYNGTVFAYGQTGSGKTFSMQGIETIPAQRGVIPRAFDHIFTATATTENVKFLVHCSYLEIYNEEVRDLLGADNKQKLEIKEQPDRGVYVAGLSMHVCHDVPACKELMTRGFNNRHVGATLMNKDSSRSHSIFTVYVEGMTETGSIRMGKLNLVDLAGSERQSKTGATGDRLKEATKINLSLSALGNVISALVDGKSKHIPYRDSKLTRLLQDSLGGNTKTIMIACVSPSSDNYDETLSTLRYANRAKNIKNKPTINEDPKDALLREYQEEIARLKSMVQPGAVGVGAPAQDAFSIEEERKKLREEFEEAMNDLRGEYEREQTSKAELQKDLESLRADYERANANLDNLNPEEAAKKIQQLQDQFIGGEEAGNTQLKQKRMKQLKEAETKTQKLAAALNVHKDDPLLQVYSTTQEKLDAVTSQLEKEVKKSKGYEREIEDLHGEFELDRLDYLDTIRKQDQQLKLLMQIMDKIQPIIKKDTNYSNVDRIKKEAVWNEDESRWILPEMSMSRTILPLANNGYMQEPARQENTLLRSNFDDKLRERLAKSDSENLANSYFKPVKQINVINKYKSDQKLSTSKSLFPSKTPTFDGLVNGVVYTDALYERAQSAKRPPRLASLNPK.

The 324-residue stretch at 4–327 (SVRVAVRCRP…LRYANRAKNI (324 aa)) folds into the Kinesin motor domain. Residue 87-94 (GQTGSGKT) participates in ATP binding. Residues 339 to 523 (DALLREYQEE…EIEDLHGEFE (185 aa)) are a coiled coil.

It belongs to the TRAFAC class myosin-kinesin ATPase superfamily. Kinesin family. Kinesin II subfamily. In terms of tissue distribution, expressed in an exclusive set of 26 chemosensory neurons whose dendritic endings are exposed to the external environment; six IL2 neurons of the inner labial sensilla, 8 pairs of amphid neurons in the head, and 2 pairs of phasmid neurons in the tail.

Its subcellular location is the cytoplasm. It localises to the cytoskeleton. It is found in the cell projection. The protein resides in the cilium. The protein localises to the cilium axoneme. Its subcellular location is the cilium basal body. In terms of biological role, kinesin motor protein which is required for the anterograde intraflagellar transport (IFT) along the middle segment of the sensory neuron cilia together with the kinesin II motor complex (composed of klp-11, klp-20 and kap-1) and on its own, is required for IFT along the distal segment. In addition, regulates the length of cilia. May have a role during neurogenesis and axonal transport. The protein is Osmotic avoidance abnormal protein 3 of Caenorhabditis elegans.